A 455-amino-acid chain; its full sequence is MSPKVTITHLSDLTPPSQERTWLTAPHPTLPLVATCSSDKTIRVYSLTNFTLLSTITGGHKRSVRTAAWKPHMTGESVLATGSFDATVGIWRRWDSYGQEGDAGMGMSSGDKQIPTDISTAASNGTGTDTADREEDEEEWRFAVLLDGHDSEVKSVSWSASGMLLATCSRDKSIWIWEDLDDGDNNFETVAVMQEHGGDVKCVSWHPSEECLASGSYDDTIRLWREDLDDWGQVACIKGHGGTVWFLDWEGEETEGNWSGPVADSVSESALSALQAQWRSQRALSGPRLLSCSDDRTVRVWRRQPKESQQTGPLSSATTGIPSIIRPTGTDEVWEEDAVLPRAHELPVYAVAWSKRTGLVASTGADGRIALYEERFVTREQEQEQQADSDAMDTTSGDVLRTEWVLVGVQDGAHGIYEINHVAWAKRADRRPGGEEEVLVSTADDGSVKVWTLTR.

2 WD repeats span residues 8-55 (THLS…LLST) and 59-101 (GHKR…GQEG). The segment at 103–136 (AGMGMSSGDKQIPTDISTAASNGTGTDTADREED) is disordered. Residues 116 to 125 (TDISTAASNG) show a composition bias toward polar residues. WD repeat units follow at residues 148–187 (GHDS…DNNF), 195–234 (EHGG…WGQV), 266–311 (VSES…SQQT), 343–382 (AHEL…REQE), and 413–455 (AHGI…TLTR). The tract at residues 302 to 326 (RRQPKESQQTGPLSSATTGIPSIIR) is disordered. The segment covering 307–321 (ESQQTGPLSSATTGI) has biased composition (polar residues).

It belongs to the WD repeat CIA1 family.

Essential component of the cytosolic iron-sulfur (Fe/S) protein assembly machinery. Required for the maturation of extramitochondrial Fe/S proteins. In Penicillium rubens (strain ATCC 28089 / DSM 1075 / NRRL 1951 / Wisconsin 54-1255) (Penicillium chrysogenum), this protein is Probable cytosolic iron-sulfur protein assembly protein 1 (cia1).